A 380-amino-acid polypeptide reads, in one-letter code: Erythronate-4-phosphate dehydrogenase (380 aa).

Substrate is bound by residues Ser45 and Thr66. Residues 126–127, Asp146, Thr175, 206–208, and Asp232 contribute to the NAD(+) site; these read QV and ASR. The active site involves Arg208. Glu237 is a catalytic residue. The Proton donor role is filled by His254. Gly257 lines the NAD(+) pocket. Tyr258 serves as a coordination point for substrate.

It belongs to the D-isomer specific 2-hydroxyacid dehydrogenase family. PdxB subfamily. Homodimer.

The protein resides in the cytoplasm. The catalysed reaction is 4-phospho-D-erythronate + NAD(+) = (R)-3-hydroxy-2-oxo-4-phosphooxybutanoate + NADH + H(+). Its pathway is cofactor biosynthesis; pyridoxine 5'-phosphate biosynthesis; pyridoxine 5'-phosphate from D-erythrose 4-phosphate: step 2/5. In terms of biological role, catalyzes the oxidation of erythronate-4-phosphate to 3-hydroxy-2-oxo-4-phosphonooxybutanoate. The chain is Erythronate-4-phosphate dehydrogenase from Pseudomonas paraeruginosa (strain DSM 24068 / PA7) (Pseudomonas aeruginosa (strain PA7)).